Reading from the N-terminus, the 331-residue chain is Geranylgeranyl transferase type-2 subunit beta (331 aa).

At Gly2 the chain carries N-acetylglycine. Position 3 is a phosphothreonine (Thr3). 6 PFTB repeats span residues Leu20–Gly61, Arg68–Asp109, Val116–Gly157, Val164–Ser205, Ser212–Gly253, and Arg260–Gly302. A geranylgeranyl diphosphate-binding site is contributed by His190–Gly192. The Zn(2+) site is built by Asp238 and Cys240. Tyr241–Trp244 contacts geranylgeranyl diphosphate. His290 contacts Zn(2+).

Belongs to the protein prenyltransferase subunit beta family. Heterotrimer composed of RABGGTA, RABGGTB and CHM; within this trimer, RABGGTA and RABGGTB form the catalytic component B, while CHM (component A) mediates peptide substrate binding. The Rab GGTase dimer (RGGT) interacts with CHM (component A) prior to Rab protein binding; the association is stabilized by geranylgeranyl pyrophosphate (GGpp). The CHM:RGGT:Rab complex is destabilized by GGpp. Interaction of RABGGTB with prenylated PTP4A2 precludes its association with RABGGTA and inhibits enzyme activity. Interacts with CHODL. Interacts with non-phosphorylated form of RAB8A; phosphorylation of RAB8A at 'Thr-72' disrupts this interaction. Requires Zn(2+) as cofactor.

The enzyme catalyses geranylgeranyl diphosphate + L-cysteinyl-[protein] = S-geranylgeranyl-L-cysteinyl-[protein] + diphosphate. Its activity is regulated as follows. The enzymatic reaction requires the aid of a Rab escort protein (also called component A). Functionally, catalyzes the transfer of a geranylgeranyl moiety from geranylgeranyl diphosphate to both cysteines of Rab proteins with the C-terminal sequence -XXCC, -XCXC and -CCXX, such as RAB1A, RAB3A, RAB5A and RAB7A. In Homo sapiens (Human), this protein is Geranylgeranyl transferase type-2 subunit beta (RABGGTB).